A 1555-amino-acid chain; its full sequence is Pre-mRNA cleavage complex 2 protein Pcf11 (1555 aa).

An N-acetylserine modification is found at Ser2. The region spanning 14-142 (AREDACRDYQ…ALDVRVNSLD (129 aa)) is the CID domain. At Ser120 the chain carries Phosphoserine; by WNK1. Phosphothreonine; by WNK1 is present on Thr121. Residues 167 to 186 (NKSPEEPSTPGTVVSSPSIS) are disordered. Residues Ser169 and Ser182 each carry the phosphoserine modification. Residues 174 to 186 (STPGTVVSSPSIS) are compositionally biased toward low complexity. Positions 202 to 239 (QLIRQQLLAKQKQLLELQQKKLELELEQAKAQLAVSLS) form a coiled coil. Residues 266–648 (VKAPHQVPVQ…QQQHRLSVDA (383 aa)) form a disordered region. A Glycyl lysine isopeptide (Lys-Gly) (interchain with G-Cter in SUMO2) cross-link involves residue Lys291. Residues 307–317 (HGKDQSHRKEF) are compositionally biased toward basic and acidic residues. Polar residues predominate over residues 320–333 (NTLNQSDTKTSKTI). A Glycyl lysine isopeptide (Lys-Gly) (interchain with G-Cter in SUMO2) cross-link involves residue Lys328. Basic and acidic residues-rich tracts occupy residues 342-364 (KQEKSKSGEKITKKELDQLDSKS), 380-421 (HTKD…DVKE), and 427-442 (EKKDKDEHMKSSEHRL). Lys456 is covalently cross-linked (Glycyl lysine isopeptide (Lys-Gly) (interchain with G-Cter in SUMO2)). Phosphothreonine is present on Thr459. Over residues 475–486 (STRKRSRSRSPK) the composition is skewed to basic residues. A phosphoserine mark is found at Ser489, Ser494, Ser509, and Ser511. Residues 494-508 (SPKRRDRRSPKRRQR) show a composition bias toward basic residues. The span at 529–567 (SHMEEFTPPSREDRNAKRSTKQDIRDPRRMKKTEEERPQ) shows a compositional bias: basic and acidic residues. Residues 568–578 (ETTNQHSTKSG) show a composition bias toward polar residues. Residues 599 to 615 (SGWEENKSLQQVDEHSK) show a composition bias toward basic and acidic residues. Residue Ser645 is modified to Phosphoserine. Lys654 participates in a covalent cross-link: Glycyl lysine isopeptide (Lys-Gly) (interchain with G-Cter in SUMO2). A Phosphoserine modification is found at Ser705. 2 disordered regions span residues 707–732 (FNDRFPLKRPRYEDSDKPFVDSPASR) and 749–781 (RPLFDGPSRPSVARDGPTKMIFEGPNKLSPRID). Basic and acidic residues predominate over residues 716–725 (PRYEDSDKPF). Residue Lys723 forms a Glycyl lysine isopeptide (Lys-Gly) (interchain with G-Cter in SUMO2) linkage. Ser728 and Ser777 each carry phosphoserine. Thr785 bears the Phosphothreonine mark. A Phosphoserine modification is found at Ser794. 3 positions are modified to asymmetric dimethylarginine: Arg805, Arg820, and Arg833. Ser851 is subject to Phosphoserine. Asymmetric dimethylarginine occurs at positions 929, 942, 955, 981, 994, and 1007. The segment at 1056–1081 (HGQPGPRFERTPGQPGPQRFDGPPGQ) is disordered. An asymmetric dimethylarginine mark is found at Arg1093 and Arg1104. Disordered regions lie at residues 1127 to 1147 (VSFNQTGPYNDPPGNAFNAPS) and 1159 to 1187 (FDSPQGPNFNGPHGPGNQSFSNPLNRASG). Ser1161 is subject to Phosphoserine. The segment covering 1162–1175 (PQGPNFNGPHGPGN) has biased composition (low complexity). Lys1278 is covalently cross-linked (Glycyl lysine isopeptide (Lys-Gly) (interchain with G-Cter in SUMO2)). Over residues 1289–1298 (SATTQVSEVT) the composition is skewed to polar residues. Positions 1289-1315 (SATTQVSEVTAQPPPEEEEDQNEDQDV) are disordered. Positions 1303 to 1315 (PEEEEDQNEDQDV) are enriched in acidic residues. Residues Lys1419, Lys1511, and Lys1524 each participate in a glycyl lysine isopeptide (Lys-Gly) (interchain with G-Cter in SUMO2) cross-link. The interval 1516–1555 (EPCDSPKVKEERIDTPPACTEESIATPSEIKTENDTVESV) is disordered. Basic and acidic residues predominate over residues 1519 to 1529 (DSPKVKEERID). A Phosphothreonine modification is found at Thr1530. A Glycyl lysine isopeptide (Lys-Gly) (interchain with G-Cter in SUMO2) cross-link involves residue Lys1546.

Associates with the phosphorylated CTD domain of POLR2A /RNA polymerase II. Phosphorylation at Ser-120 and/or Thr-121 by WNK1 weakens its association with POLR2A/RNA polymerase II, promoting transcript release from the chromatin template and mRNA export to the cytoplasm.

Its subcellular location is the nucleus. In terms of biological role, component of pre-mRNA cleavage complex II, which promotes transcription termination by RNA polymerase II. The polypeptide is Pre-mRNA cleavage complex 2 protein Pcf11 (Homo sapiens (Human)).